Here is a 271-residue protein sequence, read N- to C-terminus: Bis(5'-nucleosyl)-tetraphosphatase, symmetrical (271 aa).

It belongs to the Ap4A hydrolase family.

It catalyses the reaction P(1),P(4)-bis(5'-adenosyl) tetraphosphate + H2O = 2 ADP + 2 H(+). In terms of biological role, hydrolyzes diadenosine 5',5'''-P1,P4-tetraphosphate to yield ADP. The protein is Bis(5'-nucleosyl)-tetraphosphatase, symmetrical of Aliivibrio fischeri (strain ATCC 700601 / ES114) (Vibrio fischeri).